The chain runs to 373 residues: NADH-quinone oxidoreductase subunit D (373 aa).

This sequence belongs to the complex I 49 kDa subunit family. NDH-1 is composed of 14 different subunits. Subunits NuoB, C, D, E, F, and G constitute the peripheral sector of the complex.

Its subcellular location is the cell inner membrane. It catalyses the reaction a quinone + NADH + 5 H(+)(in) = a quinol + NAD(+) + 4 H(+)(out). Its function is as follows. NDH-1 shuttles electrons from NADH, via FMN and iron-sulfur (Fe-S) centers, to quinones in the respiratory chain. The immediate electron acceptor for the enzyme in this species is believed to be ubiquinone. Couples the redox reaction to proton translocation (for every two electrons transferred, four hydrogen ions are translocated across the cytoplasmic membrane), and thus conserves the redox energy in a proton gradient. In Syntrophobacter fumaroxidans (strain DSM 10017 / MPOB), this protein is NADH-quinone oxidoreductase subunit D.